Here is a 250-residue protein sequence, read N- to C-terminus: 23S rRNA (guanosine-2'-O-)-methyltransferase RlmB (250 aa).

3 residues coordinate S-adenosyl-L-methionine: G198, I218, and L227.

This sequence belongs to the class IV-like SAM-binding methyltransferase superfamily. RNA methyltransferase TrmH family. RlmB subfamily.

It localises to the cytoplasm. The catalysed reaction is guanosine(2251) in 23S rRNA + S-adenosyl-L-methionine = 2'-O-methylguanosine(2251) in 23S rRNA + S-adenosyl-L-homocysteine + H(+). In terms of biological role, specifically methylates the ribose of guanosine 2251 in 23S rRNA. The sequence is that of 23S rRNA (guanosine-2'-O-)-methyltransferase RlmB from Coxiella burnetii (strain RSA 493 / Nine Mile phase I).